The sequence spans 425 residues: MATSLGSNTYNRQNWEDSDFPILCQTCLGENPYIRMTKEKFGKECKICARPFTVFRWCPGVRMRFKKTEVCQTCSKMKNVCQTCLLDLEYGLPIQVRDTGLSVKDEVPRSDVNKEYYTQNMEREIANSDGTRPVGLLGKAPSSSDMLLKLARTTPYYKRNRPHICSFWVKGECKRGEECPYRHEKPTDPDDPLADQNIKDRYYGINDPVANKLLMRASTMPRLDVPDDKSITTLYIGGLGENVTDSELRNHFYQFGEIRTITIVQRQQCAFIQFATRQAAETAAEKSFNKLIINGRRLNVKWGRSQAARGKGEKDGVTESGIRLEPVPGLPGALPPPPVSDEDASTNYFNLAPTPSPAVMNLGLPPPPGVTMPPPPGFGPPMFHTMDPMAPPVPPPMALRPPGQVHYPSQDPQRMGAHASRHGGP.

A C3H1-type zinc finger spans residues 159 to 186 (RNRPHICSFWVKGECKRGEECPYRHEKP). Residues 232 to 305 (TTLYIGGLGE…RRLNVKWGRS (74 aa)) enclose the RRM domain. Disordered regions lie at residues 304–331 (RSQA…PGLP) and 384–425 (HTMD…HGGP). A compositionally biased stretch (pro residues) spans 389 to 399 (MAPPVPPPMAL).

Belongs to the SLT11 family. In terms of assembly, component of the pre-catalytic and catalytic spliceosome complexes. Component of the postcatalytic spliceosome P complex.

Its subcellular location is the nucleus. The protein resides in the cytoplasm. Functionally, required for pre-mRNA splicing as component of the activated spliceosome. Involved in the first step of pre-mRNA splicing. Binds directly to the internal stem-loop (ISL) domain of the U6 snRNA and to the pre-mRNA intron near the 5' splice site during the activation and catalytic phases of the spliceosome cycle. Required for normal early embryogenesis. This chain is Pre-mRNA-splicing factor RBM22 (rbm22), found in Danio rerio (Zebrafish).